A 539-amino-acid chain; its full sequence is MSFKSIFLTGGVVSSLGKGLTAASLALLLERQDLKVAMLKLDPYLNVDPGTMNPYEHGEVYVTDDGVETDLDLGHYHRFSSVQLSKYSIATSGQIYTKVLTKERNGEFLGSTVQVIPHVTNEIINVIQSCADHHKPDILIVEIGGTIGDIESLPFLEAVRQFRCEHPQDCLSIHMTYVPYLRAAKEIKTKPTQHSVQNLRSIGISPDVILCRSEAPLSTEVKRKISLFCNVPEHAVFNAIDLERSIYEMPLLLAKENISDFLLNKLGFSPKPLDLSDWQDLVEALCDKERQHVRIGLVGKYLEHKDAYKSVFEALFHASVPANCSLELVPIAPESEDLLEQLSQCDGCLIPGGFGTRSWEGKISAARYCREQNIPCFGICLGMQALVVEYARNVLDKPLANSMEMNPETPDPVVCMMEGQDSVVKGGTMRLGAYPCRIAPGSLASAAYKTDLVQERHRHRYEVNPSYIERLEEHGLKIAGVCPLGELCEIVEIPNHRWMLGVQFHPEFLSKLAKPHPLFIEFIRAAKAYSLEKANHEHR.

Residues M1–F268 are amidoligase domain. A CTP-binding site is contributed by S14. Residue S14 coordinates UTP. S15–L20 contributes to the ATP binding site. Position 55 (Y55) interacts with L-glutamine. D72 serves as a coordination point for ATP. 2 residues coordinate Mg(2+): D72 and E142. CTP contacts are provided by residues D149 to E151, K188 to Q193, and K224. UTP-binding positions include K188–Q193 and K224. The region spanning R294–E532 is the Glutamine amidotransferase type-1 domain. G353 serves as a coordination point for L-glutamine. C380 functions as the Nucleophile; for glutamine hydrolysis in the catalytic mechanism. L-glutamine is bound by residues L381–Q384, E404, and R460. Active-site residues include H505 and E507.

This sequence belongs to the CTP synthase family. As to quaternary structure, homotetramer.

The catalysed reaction is UTP + L-glutamine + ATP + H2O = CTP + L-glutamate + ADP + phosphate + 2 H(+). It catalyses the reaction L-glutamine + H2O = L-glutamate + NH4(+). The enzyme catalyses UTP + NH4(+) + ATP = CTP + ADP + phosphate + 2 H(+). Its pathway is pyrimidine metabolism; CTP biosynthesis via de novo pathway; CTP from UDP: step 2/2. Allosterically activated by GTP, when glutamine is the substrate; GTP has no effect on the reaction when ammonia is the substrate. The allosteric effector GTP functions by stabilizing the protein conformation that binds the tetrahedral intermediate(s) formed during glutamine hydrolysis. Inhibited by the product CTP, via allosteric rather than competitive inhibition. Its function is as follows. Catalyzes the ATP-dependent amination of UTP to CTP with either L-glutamine or ammonia as the source of nitrogen. Regulates intracellular CTP levels through interactions with the four ribonucleotide triphosphates. This chain is CTP synthase, found in Chlamydia trachomatis serovar L2 (strain ATCC VR-902B / DSM 19102 / 434/Bu).